The sequence spans 677 residues: Methionine--tRNA ligase (677 aa).

The 'HIGH' region motif lies at 15 to 25; the sequence is PYANGSIHLGH. Residues C146, C149, C159, and C162 each coordinate Zn(2+). A 'KMSKS' region motif is present at residues 333–337; it reads KMSKS. K336 provides a ligand contact to ATP. The tRNA-binding domain occupies 575–677; sequence DFAKVDLRVA…AGAKPGHQVK (103 aa).

It belongs to the class-I aminoacyl-tRNA synthetase family. MetG type 1 subfamily. In terms of assembly, homodimer. It depends on Zn(2+) as a cofactor.

The protein localises to the cytoplasm. It carries out the reaction tRNA(Met) + L-methionine + ATP = L-methionyl-tRNA(Met) + AMP + diphosphate. Its function is as follows. Is required not only for elongation of protein synthesis but also for the initiation of all mRNA translation through initiator tRNA(fMet) aminoacylation. The sequence is that of Methionine--tRNA ligase from Shigella dysenteriae serotype 1 (strain Sd197).